The primary structure comprises 950 residues: Leucine--tRNA ligase (950 aa).

The 'HIGH' region signature appears at 72-83; the sequence is PYPSGEGLHVGH. A 'KMSKS' region motif is present at residues 722 to 726; that stretch reads KIGKS. Residue Lys725 participates in ATP binding.

It belongs to the class-I aminoacyl-tRNA synthetase family.

The protein resides in the cytoplasm. It carries out the reaction tRNA(Leu) + L-leucine + ATP = L-leucyl-tRNA(Leu) + AMP + diphosphate. The polypeptide is Leucine--tRNA ligase (Mycobacterium sp. (strain KMS)).